We begin with the raw amino-acid sequence, 445 residues long: Sterile alpha motif domain-containing protein 7 (445 aa).

Positions 98–172 are required for localization to nuclear polycomb bodies; sequence HAARAEMEMY…HLQGNPILLA (75 aa). The disordered stretch occupies residues 193-282; it reads YQKPPESDTE…WDDGKGKPSE (90 aa). Basic and acidic residues predominate over residues 227 to 244; sequence IKDPDIEVDNQQKPRVAD. The 55-residue stretch at 324–378 folds into the SAM domain; it reads WTVDDVYNFIRSLPGCSDYAQVFKDHAIDGETLPLLTEQHLRGTMGLKLGPALKI. The interval 425–445 is disordered; that stretch reads SIPGPQDLLSPKRTEQDVMRN. The span at 434–445 shows a compositional bias: basic and acidic residues; that stretch reads SPKRTEQDVMRN.

As to quaternary structure, monomer, homodimer and homooligomer. Component of a Polycomb group (PcG) multiprotein PRC1-like complex. Interacts with PHC2 and NR2E3. Interacts with RNF1 in a PHC2-dependent manner. Interacts with SAMD11. In terms of tissue distribution, expressed in the retina and the pineal gland. In the retina, it is predominantly expressed in the outer nuclear layer and developing rod photoreceptors.

It localises to the nucleus. It is found in the cytoplasm. Its function is as follows. Component of a Polycomb group (PcG) multiprotein PRC1-like complex, essential for establishing rod photoreceptor cell identity and function by silencing nonrod gene expression in developing rod photoreceptor cells. Via its association with the PRC1-like complex, promotes epigenetic repressive marks H3K27me3 and H2AK119ub marks in nonrod genes, silencing their transcription. Represses Crx-controlled photoreceptor-specific gene expression. The sequence is that of Sterile alpha motif domain-containing protein 7 (Samd7) from Mus musculus (Mouse).